The primary structure comprises 152 residues: Small ribosomal subunit protein uS11 (152 aa).

Residues 133 to 152 (VTPIPTDSTRRKSGHRGRRL) are disordered. Positions 143–152 (RKSGHRGRRL) are enriched in basic residues.

The protein belongs to the universal ribosomal protein uS11 family. Component of the small ribosomal subunit. Part of the small subunit (SSU) processome, composed of more than 70 proteins and the RNA chaperone small nucleolar RNA (snoRNA) U3.

The protein localises to the cytoplasm. Its subcellular location is the nucleus. It is found in the nucleolus. In terms of biological role, component of the small ribosomal subunit. The ribosome is a large ribonucleoprotein complex responsible for the synthesis of proteins in the cell. Part of the small subunit (SSU) processome, first precursor of the small eukaryotic ribosomal subunit. During the assembly of the SSU processome in the nucleolus, many ribosome biogenesis factors, an RNA chaperone and ribosomal proteins associate with the nascent pre-rRNA and work in concert to generate RNA folding, modifications, rearrangements and cleavage as well as targeted degradation of pre-ribosomal RNA by the RNA exosome. The chain is Small ribosomal subunit protein uS11 (rps14) from Dictyostelium discoideum (Social amoeba).